The sequence spans 68 residues: Venom peptide 3 (68 aa).

The first 25 residues, 1 to 25 (MTKQSIVIVLFAAIAMMACLQRVTA), serve as a signal peptide directing secretion. 5 AXPX repeats span residues 25-28 (AEPA), 33-36 (AAPI), 37-40 (AEPY), 41-44 (ANPE), and 47-50 (ASPE). Positions 26–51 (EPAPEPIAAPIAEPYANPEAIASPEA) are excised as a propeptide. Leucine amide is present on Leu-65.

Expressed by the venom gland.

It is found in the secreted. It localises to the target cell membrane. Its function is as follows. Antimicrobial peptide with strong activity against the fungi B.cinerea (MIC=5 uM) and C.albicans (MIC=33 uM), and no activity against the Gram-negative bacterium E.coli (MIC&gt;200 uM) and the Gram-positive bacterium S.aureus (MIC&gt;200 uM). Shows cytolytic activity against insect cell lines. Has no hemolytic activity against human erythrocytes. In vivo, peptide injection in the vicinity of the head and thorax of lepidopteran larvae induces feeding disorder that lasts one or two days before recovering. The sequence is that of Venom peptide 3 from Orancistrocerus drewseni (Solitary wasp).